We begin with the raw amino-acid sequence, 190 residues long: Holliday junction branch migration complex subunit RuvA (190 aa).

Residues 1–63 (MLDFIKGKVI…EESIEIYGFL (63 aa)) form a domain I region. The interval 64-139 (ESSERDLFEE…ILPSLQYEKD (76 aa)) is domain II. Residue Asp139 is a region of interest, flexible linker. The tract at residues 139-190 (DQKYDDILSALLNLGYKRLEAKEVLDKIYNNEKDEATIIRESLSILAGKDGK) is domain III.

This sequence belongs to the RuvA family. Homotetramer. Forms an RuvA(8)-RuvB(12)-Holliday junction (HJ) complex. HJ DNA is sandwiched between 2 RuvA tetramers; dsDNA enters through RuvA and exits via RuvB. An RuvB hexamer assembles on each DNA strand where it exits the tetramer. Each RuvB hexamer is contacted by two RuvA subunits (via domain III) on 2 adjacent RuvB subunits; this complex drives branch migration. In the full resolvosome a probable DNA-RuvA(4)-RuvB(12)-RuvC(2) complex forms which resolves the HJ.

It localises to the cytoplasm. The RuvA-RuvB-RuvC complex processes Holliday junction (HJ) DNA during genetic recombination and DNA repair, while the RuvA-RuvB complex plays an important role in the rescue of blocked DNA replication forks via replication fork reversal (RFR). RuvA specifically binds to HJ cruciform DNA, conferring on it an open structure. The RuvB hexamer acts as an ATP-dependent pump, pulling dsDNA into and through the RuvAB complex. HJ branch migration allows RuvC to scan DNA until it finds its consensus sequence, where it cleaves and resolves the cruciform DNA. The chain is Holliday junction branch migration complex subunit RuvA from Thermodesulfovibrio yellowstonii (strain ATCC 51303 / DSM 11347 / YP87).